The following is a 1161-amino-acid chain: Lysine-specific demethylase 2A (1161 aa).

S28 carries the phosphoserine modification. In terms of domain architecture, JmjC spans 148–316 (FSHTRLENMV…MQLKIYSIED (169 aa)). T209 provides a ligand contact to substrate. Fe cation is bound by residues H212 and D214. Residue K229 coordinates substrate. H284 serves as a coordination point for Fe cation. Phosphoserine is present on residues S390 and S394. A compositionally biased stretch (low complexity) spans 419–433 (KTLSGDSSSDSTRGS). The disordered stretch occupies residues 419–445 (KTLSGDSSSDSTRGSHNGQVWDPQCSP). S444 carries the phosphoserine modification. K505 participates in a covalent cross-link: Glycyl lysine isopeptide (Lys-Gly) (interchain with G-Cter in SUMO2). Residues 532 to 557 (VPTIPITKPHTMKPAPRLTPVRPAAA) are disordered. T550 bears the Phosphothreonine mark. At S558 the chain carries Phosphoserine. The CXXC-type zinc-finger motif lies at 564-610 (ARRRRVRCRKCKACVQGECGVCHYCRDMKKFGGPGRMKQSCVLRQCL). 10 residues coordinate Zn(2+): C571, C574, C577, C582, C585, C588, C604, C609, C620, and C623. Residues 617–678 (SVTCSLCGEV…CWECPKCYQE (62 aa)) form a PHD-type zinc finger. T632 bears the Phosphothreonine mark. C642, C645, H650, C653, C672, and C675 together coordinate Zn(2+). S692 is subject to Phosphoserine. The segment at 705–789 (LRSCEEPLTP…PSGKKELSEV (85 aa)) is disordered. A Phosphothreonine modification is found at T713. 2 positions are modified to phosphoserine: S718 and S731. Composition is skewed to basic and acidic residues over residues 746–757 (SDHHSASRDERF) and 771–789 (TMVR…LSEV). Phosphoserine is present on residues S825, S868, and S882. The interval 840-886 (CPARNPQHGDEEGLGGEEEEEEEEEEDDSAEEGGAARLNGRGSWAQD) is disordered. Positions 851–870 (EGLGGEEEEEEEEEEDDSAE) are enriched in acidic residues. Residues 888–935 (DESWMQREVWMSVFRYLSRKELCECMRVCKTWYKWCCDKRLWTKIDLS) enclose the F-box domain. LRR repeat units follow at residues 960-981 (WTNI…LKDL) and 983-1009 (LAGC…DLRW). Position 1019 is an ADP-ribosylarginine (R1019). 4 LRR repeats span residues 1047-1072 (GLDI…DLSH), 1073-1102 (CSHL…NMAG), 1103-1127 (CNKL…DLRG), and 1128-1155 (CKQI…SDEK).

The protein belongs to the JHDM1 histone demethylase family. As to quaternary structure, part of a SCF (SKP1-cullin-F-box) protein ligase complex. Interacts with CBX5/HP1A; the interaction promotes CBX5 localization to chromatin. The SKP1-KDM2A complex interacts with UBB. It depends on Fe(2+) as a cofactor. In terms of processing, mono-ADP-ribosylated at Arg-1019 in response to DNA damage, leading to displacement from chromatin, resulting in increased dimethylation of histone H3 at 'Lys-36'.

The protein localises to the nucleus. It localises to the nucleoplasm. Its subcellular location is the chromosome. It catalyses the reaction N(6),N(6)-dimethyl-L-lysyl(36)-[histone H3] + 2 2-oxoglutarate + 2 O2 = L-lysyl(36)-[histone H3] + 2 formaldehyde + 2 succinate + 2 CO2. Histone demethylase that specifically demethylates 'Lys-36' of histone H3, thereby playing a central role in histone code. Preferentially demethylates dimethylated H3 'Lys-36' residue while it has weak or no activity for mono- and tri-methylated H3 'Lys-36'. May also recognize and bind to some phosphorylated proteins and promote their ubiquitination and degradation. Required to maintain the heterochromatic state. Associates with centromeres and represses transcription of small non-coding RNAs that are encoded by the clusters of satellite repeats at the centromere. Required to sustain centromeric integrity and genomic stability, particularly during mitosis. Regulates circadian gene expression by repressing the transcriptional activator activity of CLOCK-BMAL1 heterodimer and RORA in a catalytically-independent manner. This Mus musculus (Mouse) protein is Lysine-specific demethylase 2A (Kdm2a).